We begin with the raw amino-acid sequence, 501 residues long: Atypical kinase COQ8, mitochondrial (501 aa).

The N-terminal 29 residues, 1 to 29 (MVTNMVKLRNLRRLYCSSRLLRTIQNGRI), are a transit peptide targeting the mitochondrion. Residues 41 to 69 (YTTKSAKEGEENVERKHEEEKKDTLKSSS) are disordered. Positions 45–65 (SAKEGEENVERKHEEEKKDTL) are enriched in basic and acidic residues. The KxGQ motif signature appears at 134–137 (KIGQ). Positions 188–501 (KFDKIPMAAA…LFKEIFAYKV (314 aa)) constitute a Protein kinase domain. The short motif at 195–198 (AAAS) is the AAAS motif element. ATP is bound by residues Ser198, Lys216, and 303–306 (MTRM). The Proton acceptor role is filled by Asp346. Asn351 and Asp365 together coordinate ATP.

The protein belongs to the protein kinase superfamily. ADCK protein kinase family. In terms of assembly, forms homopolymers. Predominantly associated with a complex of about 500 kDa.

It localises to the mitochondrion inner membrane. It functions in the pathway cofactor biosynthesis; ubiquinone biosynthesis. Functionally, atypical kinase involved in the biosynthesis of coenzyme Q, also named ubiquinone, an essential lipid-soluble electron transporter for aerobic cellular respiration. Its substrate specificity is still unclear: may act as a protein kinase that mediates phosphorylation of COQ3, COQ5 and/or COQ7. According to other reports, acts as a small molecule kinase, possibly a lipid kinase that phosphorylates a prenyl lipid in the ubiquinone biosynthesis pathway, as suggested by its ability to bind coenzyme Q lipid intermediates. The sequence is that of Atypical kinase COQ8, mitochondrial (COQ8) from Saccharomyces cerevisiae (strain ATCC 204508 / S288c) (Baker's yeast).